Here is a 418-residue protein sequence, read N- to C-terminus: Glutamyl-tRNA reductase (418 aa).

Substrate contacts are provided by residues 49–52 (TCNR), Ser109, 114–116 (EPQ), and Gln120. Cys50 serves as the catalytic Nucleophile. 189–194 (GAGETI) lines the NADP(+) pocket.

Belongs to the glutamyl-tRNA reductase family. Homodimer.

The catalysed reaction is (S)-4-amino-5-oxopentanoate + tRNA(Glu) + NADP(+) = L-glutamyl-tRNA(Glu) + NADPH + H(+). It functions in the pathway porphyrin-containing compound metabolism; protoporphyrin-IX biosynthesis; 5-aminolevulinate from L-glutamyl-tRNA(Glu): step 1/2. Functionally, catalyzes the NADPH-dependent reduction of glutamyl-tRNA(Glu) to glutamate 1-semialdehyde (GSA). This chain is Glutamyl-tRNA reductase, found in Escherichia coli O6:K15:H31 (strain 536 / UPEC).